The following is a 314-amino-acid chain: 4-hydroxy-3-methylbut-2-enyl diphosphate reductase (314 aa).

Cysteine 12 contributes to the [4Fe-4S] cluster binding site. (2E)-4-hydroxy-3-methylbut-2-enyl diphosphate is bound by residues histidine 43 and histidine 81. Residues histidine 43 and histidine 81 each contribute to the dimethylallyl diphosphate site. Isopentenyl diphosphate contacts are provided by histidine 43 and histidine 81. Cysteine 103 serves as a coordination point for [4Fe-4S] cluster. Histidine 131 serves as a coordination point for (2E)-4-hydroxy-3-methylbut-2-enyl diphosphate. Histidine 131 is a dimethylallyl diphosphate binding site. Histidine 131 is an isopentenyl diphosphate binding site. The active-site Proton donor is glutamate 133. Threonine 170 lines the (2E)-4-hydroxy-3-methylbut-2-enyl diphosphate pocket. Residue cysteine 198 coordinates [4Fe-4S] cluster. Serine 226, asparagine 228, and serine 271 together coordinate (2E)-4-hydroxy-3-methylbut-2-enyl diphosphate. Positions 226, 228, and 271 each coordinate dimethylallyl diphosphate. Isopentenyl diphosphate contacts are provided by serine 226, asparagine 228, and serine 271.

This sequence belongs to the IspH family. The cofactor is [4Fe-4S] cluster.

The catalysed reaction is isopentenyl diphosphate + 2 oxidized [2Fe-2S]-[ferredoxin] + H2O = (2E)-4-hydroxy-3-methylbut-2-enyl diphosphate + 2 reduced [2Fe-2S]-[ferredoxin] + 2 H(+). It carries out the reaction dimethylallyl diphosphate + 2 oxidized [2Fe-2S]-[ferredoxin] + H2O = (2E)-4-hydroxy-3-methylbut-2-enyl diphosphate + 2 reduced [2Fe-2S]-[ferredoxin] + 2 H(+). It functions in the pathway isoprenoid biosynthesis; dimethylallyl diphosphate biosynthesis; dimethylallyl diphosphate from (2E)-4-hydroxy-3-methylbutenyl diphosphate: step 1/1. It participates in isoprenoid biosynthesis; isopentenyl diphosphate biosynthesis via DXP pathway; isopentenyl diphosphate from 1-deoxy-D-xylulose 5-phosphate: step 6/6. Functionally, catalyzes the conversion of 1-hydroxy-2-methyl-2-(E)-butenyl 4-diphosphate (HMBPP) into a mixture of isopentenyl diphosphate (IPP) and dimethylallyl diphosphate (DMAPP). Acts in the terminal step of the DOXP/MEP pathway for isoprenoid precursor biosynthesis. This Bacillus subtilis (strain 168) protein is 4-hydroxy-3-methylbut-2-enyl diphosphate reductase.